We begin with the raw amino-acid sequence, 718 residues long: Mitochondrial potassium channel ATP-binding subunit (718 aa).

The transit peptide at 1 to 25 directs the protein to the mitochondrion; that stretch reads MLVHLFRVGIRGGPFPGRLLPPLRF. 3 helical membrane-spanning segments follow: residues 128-148, 179-199, and 279-299; these read LLVL…NVQI, THLL…LVLL, and LLLM…GSGL. The ABC transmembrane type-1 domain maps to 133–420; it reads VAVVLALGAA…LSVLFGQVVR (288 aa). The ABC transporter domain occupies 455 to 692; it reads VTFQNVCFSY…GGLYAELIRR (238 aa). 490–497 contributes to the ATP binding site; the sequence is GQSGGGKT. Residues 697–718 are disordered; it reads APRTAAPLPKKPEGPRNHQHKS.

It belongs to the ABC transporter superfamily. ABCB family. Multidrug resistance exporter (TC 3.A.1.201) subfamily. In terms of assembly, the mitochondrial potassium channel (mitoK(ATP)) is composed of 4 subunits of CCDC51/MITOK and 4 subunits of ABCB8/MITOSUR. Physically interacts with PAAT. Interacts with Neuropilin-1 (NRP1) in mitochondria.

It is found in the mitochondrion inner membrane. Its activity is regulated as follows. Channel activity inhibited by ATP via ABCB8/MITOSUR subunit. In terms of biological role, ATP-binding subunit of the mitochondrial ATP-gated potassium channel (mitoK(ATP)). Together with pore-forming subunit CCDC51/MITOK of the mitoK(ATP) channel, mediates ATP-dependent potassium currents across the mitochondrial inner membrane. An increase in ATP intracellular levels closes the channel, inhibiting K(+) transport, whereas a decrease in ATP levels enhances K(+) uptake in the mitochondrial matrix. Plays a role in mitochondrial iron transport. Required for maintenance of normal cardiac function, possibly by influencing mitochondrial iron export and regulating the maturation of cytosolic iron sulfur cluster-containing enzymes. The chain is Mitochondrial potassium channel ATP-binding subunit (ABCB8) from Pongo abelii (Sumatran orangutan).